A 503-amino-acid polypeptide reads, in one-letter code: Probable protein kinase UbiB (503 aa).

Residues 13–35 form a helical membrane-spanning segment; it reads TFYRYRLAGLCASLMGSGWICAL. The Protein kinase domain occupies 120–491; sequence EFETEPIASA…QQRQSLWLAV (372 aa). Residues 126-134 and Lys148 each bind ATP; that span reads IASASIAQV. Asp283 acts as the Proton acceptor in catalysis. Residues 485-502 traverse the membrane as a helical segment; the sequence is QSLWLAVIAVVLLLILLL.

This sequence belongs to the ABC1 family. UbiB subfamily.

Its subcellular location is the cell inner membrane. It participates in cofactor biosynthesis; ubiquinone biosynthesis [regulation]. Is probably a protein kinase regulator of UbiI activity which is involved in aerobic coenzyme Q (ubiquinone) biosynthesis. In Neisseria meningitidis serogroup A / serotype 4A (strain DSM 15465 / Z2491), this protein is Probable protein kinase UbiB.